The primary structure comprises 595 residues: MSSQLKSTWAPVPSTKPSQPCKIGTDFKGERIVYPANKAIIIREIEKQENCFQYNEHTAPTTVARFSPSGYYVASGDNQGNVRIWDCAGEDKILKNQVTAISGRITDLDWDGDSQRIIAVGEGKERYGHAFTADSGNSVGEIFGHSSVVNAVSLRKSRPFRAATASDDNSINFFHGTPYRFNRSLRVHSKFVYDVRYSPNDERFASAGADGKVYVFDGKTGDQVYEIDAHKGSIFSISWSPDSSQFVTSSAGYSCKIWDANTGSLIREWLSSDKKQLVGTVWPTKDLIIVVNSKGNLTYLNPSDCKVIDTIYGHQRSITAATLSPDATHFYTASYDGTVLSWDIGKQKAFPLVGESHTNQVMQMIMADDHVITIGMDDTLRVIDIKQGCFAKDNVFPTGYQPIGVCSVEDCLILVTVSDIQVLRSLTGVSTAKTIYQPSAVASHPLKSEFCVGGEDCCVYIHTLEKGELCEVAQCKDSTAPITCLAYSPDGKYLACGDASGKVVLYDANSREVITSRWAFHTGRILGMSWNAKSTHLATASLDTNIHIYSVERPMKYIAMKNAHSLGATQVEWVSENELLSTGSDAAIKVWSVTF.

The segment at 1–21 is disordered; it reads MSSQLKSTWAPVPSTKPSQPC. 11 WD repeats span residues 56 to 95, 100 to 143, 144 to 184, 187 to 226, 229 to 268, 313 to 352, 356 to 393, 433 to 472, 477 to 516, 520 to 559, and 564 to 594; these read EHTAPTTVARFSPSGYYVASGDNQGNVRIWDCAGEDKILK, AISG…GEIF, GHSS…FNRS, VHSKFVYDVRYSPNDERFASAGADGKVYVFDGKTGDQVYE, AHKGSIFSISWSPDSSQFVTSSAGYSCKIWDANTGSLIRE, GHQRSITAATLSPDATHFYTASYDGTVLSWDIGKQKAFPL, SHTNQVMQMIMADDHVITIGMDDTLRVIDIKQGCFAKD, KTIYQPSAVASHPLKSEFCVGGEDCCVYIHTLEKGELCEV, DSTAPITCLAYSPDGKYLACGDASGKVVLYDANSREVITS, FHTGRILGMSWNAKSTHLATASLDTNIHIYSVERPMKYIA, and HSLGATQVEWVSENELLSTGSDAAIKVWSVT.

The protein belongs to the WD repeat AIP1 family.

This is an uncharacterized protein from Schizosaccharomyces pombe (strain 972 / ATCC 24843) (Fission yeast).